The primary structure comprises 315 residues: tRNA dimethylallyltransferase (315 aa).

9–16 (GPTASGKT) provides a ligand contact to ATP. 11 to 16 (TASGKT) lines the substrate pocket. Interaction with substrate tRNA stretches follow at residues 34–37 (DSLL) and 158–162 (QRIQR).

It belongs to the IPP transferase family. As to quaternary structure, monomer. Mg(2+) is required as a cofactor.

The catalysed reaction is adenosine(37) in tRNA + dimethylallyl diphosphate = N(6)-dimethylallyladenosine(37) in tRNA + diphosphate. Catalyzes the transfer of a dimethylallyl group onto the adenine at position 37 in tRNAs that read codons beginning with uridine, leading to the formation of N6-(dimethylallyl)adenosine (i(6)A). This chain is tRNA dimethylallyltransferase, found in Acidithiobacillus ferrooxidans (strain ATCC 53993 / BNL-5-31) (Leptospirillum ferrooxidans (ATCC 53993)).